Consider the following 157-residue polypeptide: Fimbrial protein Q (157 aa).

A propeptide spanning residues methionine 1–glycine 6 is cleaved from the precursor. Phenylalanine 7 bears the N-methylphenylalanine mark. A disulfide bridge links cysteine 136 with cysteine 155.

The protein belongs to the N-Me-Phe pilin family. The pili are polar flexible filaments of about 5.4 nanometers diameter and 2.5 micrometers average length; they consist of only a single polypeptide chain arranged in a helical configuration of five subunits per turn in the assembled pilus.

It is found in the fimbrium. The polypeptide is Fimbrial protein Q (tfpQ) (Moraxella bovis).